A 112-amino-acid polypeptide reads, in one-letter code: UPF0060 membrane protein XOO1694 (112 aa).

The next 4 membrane-spanning stretches (helical) occupy residues 8–28 (LLLFAATALAELVGCYLPYLW), 32–52 (GGSVWLLLPTALRLASFVWLL), 62–82 (VYAAYGGVYIASALGLWLWWV), and 92–112 (LLGAVCCLFGMAIIMFAPRSA).

This sequence belongs to the UPF0060 family.

It is found in the cell inner membrane. The protein is UPF0060 membrane protein XOO1694 of Xanthomonas oryzae pv. oryzae (strain MAFF 311018).